The following is a 360-amino-acid chain: Histidinol-phosphate aminotransferase (360 aa).

K222 carries the N6-(pyridoxal phosphate)lysine modification.

This sequence belongs to the class-II pyridoxal-phosphate-dependent aminotransferase family. Histidinol-phosphate aminotransferase subfamily. The cofactor is pyridoxal 5'-phosphate.

The enzyme catalyses L-histidinol phosphate + 2-oxoglutarate = 3-(imidazol-4-yl)-2-oxopropyl phosphate + L-glutamate. It participates in amino-acid biosynthesis; L-histidine biosynthesis; L-histidine from 5-phospho-alpha-D-ribose 1-diphosphate: step 7/9. This is Histidinol-phosphate aminotransferase from Haloarcula marismortui (strain ATCC 43049 / DSM 3752 / JCM 8966 / VKM B-1809) (Halobacterium marismortui).